Consider the following 172-residue polypeptide: Stellate protein CG33237 (172 aa).

This sequence belongs to the casein kinase 2 subunit beta family. In terms of assembly, interacts in vitro with the casein kinase 2 alpha subunit (CkII-alpha). The relevance of such interaction is however unclear in vivo. Probably not expressed in wild-type flies. In males lacking the Y chromosome, it is testis-specific and constitutes the main component of star-shaped crystals.

In terms of biological role, unknown. In males lacking the Y chromosome, its strong overexpression leads to the appearance of proteinaceous star-shaped crystals in the primary spermatocytes causing meiotic drive, possibly by interfering with normal casein kinase 2 activity. The polypeptide is Stellate protein CG33237 (Ste:CG33237) (Drosophila melanogaster (Fruit fly)).